The sequence spans 139 residues: D-ribose pyranase (139 aa).

His-20 (proton donor) is an active-site residue. Residues Asp-28, His-106, and 128-130 each bind substrate; that span reads YAN.

This sequence belongs to the RbsD / FucU family. RbsD subfamily. In terms of assembly, homodecamer.

The protein localises to the cytoplasm. The enzyme catalyses beta-D-ribopyranose = beta-D-ribofuranose. It participates in carbohydrate metabolism; D-ribose degradation; D-ribose 5-phosphate from beta-D-ribopyranose: step 1/2. Its function is as follows. Catalyzes the interconversion of beta-pyran and beta-furan forms of D-ribose. This is D-ribose pyranase from Pectobacterium carotovorum subsp. carotovorum (strain PC1).